The primary structure comprises 404 residues: MTKHSQKQNRQKQTTQKQTRRKKPAGKLKAKSEAKLDTRGKPETTEKKGLHERNLHRDGYDFEQLIEASPALKPYVRPNPYGNLSIDFADPLAVKALNLALLQLHYRIEYWDIPAGFLCPPIPGRVDYLHYIADLLAGIDSDTVGDKAEEQVEEIGTRQNVPYASKPESSAPKQRYKSQKRMKINALDIGTGANGIYPILGIQAYGWRFVASDVDPLSIENVNRIVGQNKALQGKLKTRLQTDHQKVFHGIIQADDRFDITLCNPPFHASLSEASEGSLRKVKNLAANRAAKGHKPEPAASKAKPDANELNFGGQKAELWCEGGEKQFLANMIRESKDFATQCLWFTSLVSKKENLQPCYAALEKVGAVTVKTIDMAQGNKLTRVLAWSYLTPKQQALWAKYRS.

2 stretches are compositionally biased toward basic residues: residues 1–10 and 18–29; these read MTKHSQKQNR and QTRRKKPAGKLK. Disordered regions lie at residues 1–54, 156–177, and 289–308; these read MTKH…HERN, GTRQNVPYASKPESSAPKQRYK, and RAAKGHKPEPAASKAKPDAN. Over residues 30-54 the composition is skewed to basic and acidic residues; that stretch reads AKSEAKLDTRGKPETTEKKGLHERN. Residues 157-172 are compositionally biased toward polar residues; sequence TRQNVPYASKPESSAP.

Belongs to the methyltransferase superfamily. METTL16/RlmF family.

The protein resides in the cytoplasm. It catalyses the reaction adenosine(1618) in 23S rRNA + S-adenosyl-L-methionine = N(6)-methyladenosine(1618) in 23S rRNA + S-adenosyl-L-homocysteine + H(+). Its function is as follows. Specifically methylates the adenine in position 1618 of 23S rRNA. In Shewanella sediminis (strain HAW-EB3), this protein is Ribosomal RNA large subunit methyltransferase F.